Here is an 88-residue protein sequence, read N- to C-terminus: U18-hexatoxin-Hi1a (88 aa).

Positions 1-17 are cleaved as a signal peptide; sequence MRIYSLLILSFLLLASA. Residues 18–47 constitute a propeptide that is removed on maturation; it reads VLINSAEMPRSEKSLLYSIMQGREDSEEGR. Cystine bridges form between Cys-48-Cys-63, Cys-55-Cys-69, Cys-62-Cys-81, and Cys-71-Cys-79.

It belongs to the neurotoxin 07 (Beta/delta-agtx) family. 02 (aga-3) subfamily. In terms of tissue distribution, expressed by the venom gland.

Its subcellular location is the secreted. Weak insecticidal toxin with probable ion channel impairing activity. In vivo, induces paralysis when injected into sheep blowflies (L.cuprina). Shows weak toxicity, since it is only toxic at high doses, and flies recover within 24 hours. The protein is U18-hexatoxin-Hi1a of Hadronyche infensa (Fraser island funnel-web spider).